The primary structure comprises 284 residues: Putative mitochondrial carrier protein PET8 (284 aa).

Solcar repeat units lie at residues 2–75 (NTFF…MKVK), 92–178 (IDTT…LKKT), and 192–271 (KGAI…VHSL). The next 6 helical transmembrane spans lie at 5 to 25 (FLSL…FFPI), 50 to 70 (GLGS…ISYD), 98 to 118 (MLSS…AEVV), 153 to 169 (GWST…CIQF), 194 to 214 (AICG…LDFL), and 252 to 272 (MWIS…HSLL).

The protein belongs to the mitochondrial carrier (TC 2.A.29) family.

Its subcellular location is the mitochondrion inner membrane. The sequence is that of Putative mitochondrial carrier protein PET8 (PET8) from Saccharomyces cerevisiae (strain ATCC 204508 / S288c) (Baker's yeast).